The following is a 403-amino-acid chain: Phosphoglycerate kinase (403 aa).

Residues Asp-22 to Asn-24, Arg-37, His-60 to Arg-63, Arg-119, and Arg-156 contribute to the substrate site. Residues Lys-206, Gly-302, Glu-333, and Gly-359–Ser-362 contribute to the ATP site.

Belongs to the phosphoglycerate kinase family. In terms of assembly, monomer.

Its subcellular location is the cytoplasm. The catalysed reaction is (2R)-3-phosphoglycerate + ATP = (2R)-3-phospho-glyceroyl phosphate + ADP. The protein operates within carbohydrate degradation; glycolysis; pyruvate from D-glyceraldehyde 3-phosphate: step 2/5. This Streptomyces coelicolor (strain ATCC BAA-471 / A3(2) / M145) protein is Phosphoglycerate kinase (pgk).